A 424-amino-acid polypeptide reads, in one-letter code: Glutamyl-tRNA reductase (424 aa).

Substrate is bound by residues 49–52, serine 108, 113–115, and glutamine 119; these read TCNR and EPQ. Cysteine 50 (nucleophile) is an active-site residue. Position 188 to 193 (188 to 193) interacts with NADP(+); the sequence is GAGETI.

This sequence belongs to the glutamyl-tRNA reductase family. In terms of assembly, homodimer.

It carries out the reaction (S)-4-amino-5-oxopentanoate + tRNA(Glu) + NADP(+) = L-glutamyl-tRNA(Glu) + NADPH + H(+). It functions in the pathway porphyrin-containing compound metabolism; protoporphyrin-IX biosynthesis; 5-aminolevulinate from L-glutamyl-tRNA(Glu): step 1/2. In terms of biological role, catalyzes the NADPH-dependent reduction of glutamyl-tRNA(Glu) to glutamate 1-semialdehyde (GSA). This chain is Glutamyl-tRNA reductase, found in Hahella chejuensis (strain KCTC 2396).